We begin with the raw amino-acid sequence, 310 residues long: tRNA-cytidine(32) 2-sulfurtransferase (310 aa).

Residues 48–53 (SGGKDS) carry the PP-loop motif motif. Cys123, Cys126, and Cys214 together coordinate [4Fe-4S] cluster.

The protein belongs to the TtcA family. Homodimer. The cofactor is Mg(2+). It depends on [4Fe-4S] cluster as a cofactor.

Its subcellular location is the cytoplasm. It carries out the reaction cytidine(32) in tRNA + S-sulfanyl-L-cysteinyl-[cysteine desulfurase] + AH2 + ATP = 2-thiocytidine(32) in tRNA + L-cysteinyl-[cysteine desulfurase] + A + AMP + diphosphate + H(+). It functions in the pathway tRNA modification. Catalyzes the ATP-dependent 2-thiolation of cytidine in position 32 of tRNA, to form 2-thiocytidine (s(2)C32). The sulfur atoms are provided by the cysteine/cysteine desulfurase (IscS) system. The protein is tRNA-cytidine(32) 2-sulfurtransferase of Vibrio vulnificus (strain YJ016).